A 763-amino-acid chain; its full sequence is Palmitoyltransferase AKR1 (763 aa).

A compositionally biased stretch (polar residues) spans 1–15 (MEDNSEQASVSSQAS). The interval 1–59 (MEDNSEQASVSSQASMRPLVSDNGDREAGAGVEVNIANDNDTSVGVDGENGNEDDDPIL) is disordered. Over 1–307 (MEDNSEQASV…KLVKRDDHAK (307 aa)) the chain is Cytoplasmic. ANK repeat units lie at residues 57 to 87 (PILS…NVSS), 92 to 121 (EGVT…NVES), 126 to 155 (LEAT…SATT), 159 to 188 (QGFN…SKGI), 197 to 226 (KGRT…SVKI), 230 to 259 (GGFT…DFFQ), and 292 to 322 (NGYP…GFAF). The chain crosses the membrane as a helical span at residues 308-325 (IITFLIPLLVLGFAFFGF). Topologically, residues 326 to 330 (SHLHI) are lumenal. Residues 331–348 (LFALPVIILLLLASNKFI) form a helical membrane-spanning segment. Residues 349–368 (KSFLLPSYETKGTNSASLLK) are Cytoplasmic-facing. A helical membrane pass occupies residues 369 to 389 (SPLIAGILFGSIFWLAFVWIL). Over 390–401 (RILPYTFTKRPL) the chain is Lumenal. A helical transmembrane segment spans residues 402–422 (GNLTFCAILCFVCYSLFLLAF). Residues 423 to 497 (SDPGHIGSEN…YNDVGLKNHK (75 aa)) lie on the Cytoplasmic side of the membrane. The DHHC domain occupies 454–504 (SFCLETWVRKPLRSKYSYLNDALILRFDHYCPWIYNDVGLKNHKLFIFFIL). C484 functions as the S-palmitoyl cysteine intermediate in the catalytic mechanism. A helical transmembrane segment spans residues 498 to 518 (LFIFFILALELGIFSFVKVCL). Residues 519 to 546 (KYFDELDMDGDCFILGDDDLCSGLIGDR) lie on the Lumenal side of the membrane. The helical transmembrane segment at 547 to 567 (FTFLIMTWACIQAVWIFSLVI) threads the bilayer. The Cytoplasmic portion of the chain corresponds to 568–763 (VQLFQITKGL…DPLSEIDDMV (196 aa)).

Belongs to the DHHC palmitoyltransferase family. AKR/ZDHHC17 subfamily.

Its subcellular location is the early endosome membrane. It localises to the golgi apparatus membrane. It carries out the reaction L-cysteinyl-[protein] + hexadecanoyl-CoA = S-hexadecanoyl-L-cysteinyl-[protein] + CoA. Functionally, palmitoyltransferase specific for casein kinase 1. The sequence is that of Palmitoyltransferase AKR1 (AKR1) from Candida glabrata (strain ATCC 2001 / BCRC 20586 / JCM 3761 / NBRC 0622 / NRRL Y-65 / CBS 138) (Yeast).